Reading from the N-terminus, the 432-residue chain is 3-phosphoshikimate 1-carboxyvinyltransferase (432 aa).

The 3-phosphoshikimate site is built by Lys-22, Ser-23, and Arg-27. Lys-22 contributes to the phosphoenolpyruvate binding site. Gly-96 and Arg-127 together coordinate phosphoenolpyruvate. 3-phosphoshikimate contacts are provided by Ser-173, Ser-174, Gln-175, Ser-201, Asp-316, Asn-339, and Lys-343. Gln-175 is a binding site for phosphoenolpyruvate. Asp-316 (proton acceptor) is an active-site residue. Phosphoenolpyruvate is bound by residues Arg-347, Arg-391, and Lys-416.

The protein belongs to the EPSP synthase family. In terms of assembly, monomer.

It is found in the cytoplasm. The catalysed reaction is 3-phosphoshikimate + phosphoenolpyruvate = 5-O-(1-carboxyvinyl)-3-phosphoshikimate + phosphate. It functions in the pathway metabolic intermediate biosynthesis; chorismate biosynthesis; chorismate from D-erythrose 4-phosphate and phosphoenolpyruvate: step 6/7. Functionally, catalyzes the transfer of the enolpyruvyl moiety of phosphoenolpyruvate (PEP) to the 5-hydroxyl of shikimate-3-phosphate (S3P) to produce enolpyruvyl shikimate-3-phosphate and inorganic phosphate. The polypeptide is 3-phosphoshikimate 1-carboxyvinyltransferase (Haemophilus influenzae (strain 86-028NP)).